The primary structure comprises 271 residues: uncharacterized protein (271 aa).

The protein belongs to the HAD-like hydrolase superfamily.

This is an uncharacterized protein from Staphylococcus aureus (strain MRSA252).